Here is a 370-residue protein sequence, read N- to C-terminus: MAPTTPATHDPALSHGAPPTQGSQAPANAAPNLTPADISGMQLNGLDQSQIMNLLRSLPGMFTGAKIPDQGQGNPKEDAAQTLSNLAQASSPFGGQHLPIHYQTGAAGGLPGINDPGPSTHPRGPPNLGQLSAVAMQAAPATIQHQDQQQSGRQEDGEQAGNTSIDSPSAKDGENGTGEFNQTSTSTPSGGRRGGRSATMGSDEWSRQRKDNHKEVERRRRGNINEGINELGRIVPSGSGEKAKGAILSRAVQYIHHLKENEARNIEKWTLEKLLMDQAMGDLQAQLEEIKRLWEEERMARTRLEAELEVLRNMNGVSTAGAGSGAAKDESAAGTKRRSTDGADAAGTNVEGGNNDNAEGERDGKRQRTE.

Disordered stretches follow at residues 1–39 (MAPT…ADIS) and 102–221 (YQTG…RRRR). The span at 143-152 (IQHQDQQQSG) shows a compositional bias: polar residues. A compositionally biased stretch (low complexity) spans 183–202 (TSTSTPSGGRRGGRSATMGS). A compositionally biased stretch (basic and acidic residues) spans 204–218 (EWSRQRKDNHKEVER). The tract at residues 208 to 221 (QRKDNHKEVERRRR) is basic motif. Residues 208–258 (QRKDNHKEVERRRRGNINEGINELGRIVPSGSGEKAKGAILSRAVQYIHHL) enclose the bHLH domain. Residues 222 to 258 (GNINEGINELGRIVPSGSGEKAKGAILSRAVQYIHHL) are helix-loop-helix motif. The disordered stretch occupies residues 317–370 (VSTAGAGSGAAKDESAAGTKRRSTDGADAAGTNVEGGNNDNAEGERDGKRQRTE). A compositionally biased stretch (basic and acidic residues) spans 359-370 (EGERDGKRQRTE).

It localises to the nucleus. Functionally, transcription factor that may regulate the expression of the gene cluster that mediates the biosynthesis of psilocybin, a psychotropic tryptamine-derived natural product. The protein is Psilocybin cluster transcription regulator of Psilocybe cyanescens.